A 454-amino-acid polypeptide reads, in one-letter code: Probable ECA polymerase (454 aa).

The next 11 helical transmembrane spans lie at 3–23 (LGQFGGLFCIYLIAVIFILTL), 39–59 (FSMLYLLTFYFGFPLTCMLVF), 61–81 (FGVAVVPVEYLLYAMLSATAF), 119–139 (LALVAVGTVGIFFMQNGFLLF), 154–174 (GVALKRFFYFFIPAMLVVYFL), 180–200 (AWFFFLASTVAFGILTYVIVG), 201–221 (GTRANIIIAFSLFLFIGIVRG), 222–242 (WITLWMLAAAGVFGIVGMFWL), 340–360 (LVVMGGVLFIPLGAIVVGLII), 377–397 (YKAAILQSFCFGAVFNIIVLA), and 409–429 (VFFCVIFGACLVLAKLLYWLF).

The protein belongs to the WzyE family. In terms of assembly, probably part of a complex composed of WzxE, WzyE and WzzE.

It is found in the cell inner membrane. The protein operates within bacterial outer membrane biogenesis; enterobacterial common antigen biosynthesis. Functionally, probably involved in the polymerization of enterobacterial common antigen (ECA) trisaccharide repeat units. This is Probable ECA polymerase from Yersinia pseudotuberculosis serotype O:1b (strain IP 31758).